A 476-amino-acid chain; its full sequence is Protein transport protein SEC61 subunit alpha (476 aa).

The Cytoplasmic segment spans residues 1–33; the sequence is MSSLRFLDLVKPFVPFLPEVQQPETKIPFNQKL. The chain crosses the membrane as a helical span at residues 34-54; sequence MWTGLTLLIFLVMSQMPLYGI. Residues 55-76 lie on the Lumenal side of the membrane; that stretch reads VSSDTSDPLYWLRMMMASNRGT. Residues 77–97 form a helical membrane-spanning segment; that stretch reads LMELGITPIISSGMVFQLLAG. Residues 98-119 lie on the Cytoplasmic side of the membrane; it reads THMIDVNLDLKADRELYQTAQK. The chain crosses the membrane as a helical span at residues 120-140; sequence LFAVILSIGTATVYVFTGLYG. At 141 to 146 the chain is on the lumenal side; it reads PPSDLG. A helical membrane pass occupies residues 147–167; the sequence is AGIVFLLILQLVVAGMIVILL. Over 168 to 246 the chain is Cytoplasmic; that stretch reads DELLQKGYGL…YRQNLPNIMN (79 aa). Residues 247–267 form a helical membrane-spanning segment; sequence LLATLVVFAAVIYLQGFRVEI. Residues 268–361 are Lumenal-facing; the sequence is PVKSSRQRGA…KDALLDPIHT (94 aa). A helical transmembrane segment spans residues 362–382; the sequence is AVYIAYMLTACAVFSKTWIEV. Topologically, residues 383–415 are cytoplasmic; that stretch reads SGSSPRDVAKQLKDQGLVMAGHREQSMYKELKR. The chain crosses the membrane as a helical span at residues 416 to 434; sequence IIPTAAAFGGACIGALSVA. Residues 435–440 are Lumenal-facing; sequence SDLMGA. The chain crosses the membrane as a helical span at residues 441–458; it reads LGSGTGTLLAVTIIYGYF. At 459–476 the chain is on the cytoplasmic side; it reads EIAAKEGDLQGMKGMIMG.

It belongs to the SecY/SEC61-alpha family. Heterotrimeric complex composed of SEC61-alpha, SEC61-beta and SEC61-gamma.

It localises to the endoplasmic reticulum membrane. In terms of biological role, appears to play a crucial role in the insertion of secretory and membrane polypeptides into the ER. It is required for assembly of membrane and secretory proteins and is essential for cell growth. It interacts with other membrane proteins required for protein translocation. Upon binding to SEC62/63 complex, secretory precursor polypeptides may engage SEC61 to begin membrane penetration event. A cycle of assembly and disassembly of SEC62/63 from SEC61 may govern the activity of the translocase. This is Protein transport protein SEC61 subunit alpha (sec-61) from Neurospora crassa (strain ATCC 24698 / 74-OR23-1A / CBS 708.71 / DSM 1257 / FGSC 987).